Here is a 215-residue protein sequence, read N- to C-terminus: Meiotic chromosome segregation protein P8B7.28c (215 aa).

Residues 159–202 (TINSEYADDVSDNTDEERTESKGQQESNSAEEYDDDDSDEDRME) are disordered. Acidic residues-rich tracts occupy residues 164–176 (YADDVSDNTDEER) and 187–201 (SAEEYDDDDSDEDRM).

The protein localises to the nucleus. It localises to the nucleolus. In terms of biological role, required for meiotic chromosome segregation. The protein is Meiotic chromosome segregation protein P8B7.28c of Schizosaccharomyces pombe (strain 972 / ATCC 24843) (Fission yeast).